Reading from the N-terminus, the 316-residue chain is Tetrahydromethanopterin S-methyltransferase subunit H (316 aa).

This sequence belongs to the MtrH family. As to quaternary structure, the complex is composed of 8 subunits; MtrA, MtrB, MtrC, MtrD, MtrE, MtrF, MtrG and MtrH.

The enzyme catalyses 5-methyl-5,6,7,8-tetrahydromethanopterin + coenzyme M + 2 Na(+)(in) = 5,6,7,8-tetrahydromethanopterin + methyl-coenzyme M + 2 Na(+)(out). The protein operates within one-carbon metabolism; methanogenesis from CO(2); methyl-coenzyme M from 5,10-methylene-5,6,7,8-tetrahydromethanopterin: step 2/2. In terms of biological role, part of a complex that catalyzes the formation of methyl-coenzyme M and tetrahydromethanopterin from coenzyme M and methyl-tetrahydromethanopterin. This is an energy-conserving, sodium-ion translocating step. MtrH catalyzes the transfer of the methyl group from methyl-tetrahydromethanopterin to the corrinoid prosthetic group of MtrA. This is Tetrahydromethanopterin S-methyltransferase subunit H from Methanosarcina barkeri (strain Fusaro / DSM 804).